The chain runs to 327 residues: Putative hydroxymethylpyrimidine/phosphomethylpyrimidine kinase C18B5.05c (327 aa).

Q54 serves as a coordination point for 4-amino-5-hydroxymethyl-2-methylpyrimidine.

It belongs to the ThiD family.

Its subcellular location is the cytoplasm. It is found in the nucleus. The enzyme catalyses 4-amino-5-hydroxymethyl-2-methylpyrimidine + ATP = 4-amino-2-methyl-5-(phosphooxymethyl)pyrimidine + ADP + H(+). It carries out the reaction 4-amino-2-methyl-5-(phosphooxymethyl)pyrimidine + ATP = 4-amino-2-methyl-5-(diphosphooxymethyl)pyrimidine + ADP. It participates in cofactor biosynthesis; thiamine diphosphate biosynthesis; 4-amino-2-methyl-5-diphosphomethylpyrimidine from 5-amino-1-(5-phospho-D-ribosyl)imidazole: step 2/3. It functions in the pathway cofactor biosynthesis; thiamine diphosphate biosynthesis; 4-amino-2-methyl-5-diphosphomethylpyrimidine from 5-amino-1-(5-phospho-D-ribosyl)imidazole: step 3/3. Catalyzes the phosphorylation of hydroxymethylpyrimidine phosphate (HMP-P) to HMP-PP, and of HMP to HMP-P. This chain is Putative hydroxymethylpyrimidine/phosphomethylpyrimidine kinase C18B5.05c, found in Schizosaccharomyces pombe (strain 972 / ATCC 24843) (Fission yeast).